The chain runs to 1173 residues: PR domain zinc finger protein 10 (1173 aa).

The segment at 146–211 is disordered; sequence RLPPMEGADS…AEPPRPFDPN (66 aa). Residues 154–167 show a composition bias toward polar residues; the sequence is DSSTTINSLPSPNA. The segment covering 172–202 has biased composition (acidic residues); it reads KEDDDDDDDDDDDEEEEDDDGEDSDLDDWEA. Residues 248-366 form the SET domain; sequence LPLVLYIDRF…PKQELKVWYA (119 aa). Residues 267 to 371 form an N-terminal PR domain; essential for transcriptional activator activity region; the sequence is IPKRTQFGPL…KVWYAASYAE (105 aa). The C2H2-type 1 zinc-finger motif lies at 395-417; it reads WPCYECNRRFMSSEQLQQHLNSH. Residues 430 to 447 are compositionally biased toward basic residues; the sequence is RGRTRTRRKFGPGRRPGR. The segment at 430-451 is disordered; the sequence is RGRTRTRRKFGPGRRPGRPPKF. 9 C2H2-type zinc fingers span residues 559–581, 589–611, 617–639, 645–668, 673–695, 701–724, 756–779, 801–824, and 863–886; these read FKCL…LRFH, LTCD…MKFH, YSCI…VVVH, FSCP…RSFH, YQCT…MLRH, FLCS…QRMH, FKCR…SKRH, YYCQ…LKNH, and VCCP…RKKH. A C-terminal glutamine-rich region; essential for transcriptional activator activity region spans residues 926 to 1153; that stretch reads QAMTELSQTL…PASNSSQTTQ (228 aa). Disordered regions lie at residues 1014 to 1056 and 1125 to 1173; these read PTSG…ANSA and KKSS…ISKP. Residues 1150–1160 show a composition bias toward low complexity; it reads QTTQYIITTTT. The segment covering 1161 to 1173 has biased composition (polar residues); that stretch reads NMNGSSEVHISKP.

It belongs to the class V-like SAM-binding methyltransferase superfamily.

The protein localises to the nucleus. Functionally, transcriptional activator, essential for early embryonic development and survival of embryonic stem cells (ESCs). Supports cell growth and survival during early development by transcriptionally activating the expression of the translation initiation factor EIF3B, to sustain global translation. Activates the transcription of FLNC. This chain is PR domain zinc finger protein 10 (prdm10), found in Xenopus tropicalis (Western clawed frog).